Consider the following 685-residue polypeptide: Translation initiation factor IF-2 (685 aa).

The interval Ile-60–Pro-79 is disordered. Basic and acidic residues predominate over residues Lys-64 to Pro-79. The 178-residue stretch at Asn-175–Val-352 folds into the tr-type G domain. Positions Gly-184–Thr-191 are G1. Gly-184–Thr-191 lines the GTP pocket. The segment at Gly-209 to Ser-213 is G2. The G3 stretch occupies residues Asp-230 to Gly-233. GTP is bound by residues Asp-230–His-234 and Asn-284–Asp-287. The interval Asn-284–Asp-287 is G4. The segment at Ser-321–Arg-323 is G5.

It belongs to the TRAFAC class translation factor GTPase superfamily. Classic translation factor GTPase family. IF-2 subfamily.

The protein resides in the cytoplasm. One of the essential components for the initiation of protein synthesis. Protects formylmethionyl-tRNA from spontaneous hydrolysis and promotes its binding to the 30S ribosomal subunits. Also involved in the hydrolysis of GTP during the formation of the 70S ribosomal complex. This Fervidobacterium nodosum (strain ATCC 35602 / DSM 5306 / Rt17-B1) protein is Translation initiation factor IF-2.